Consider the following 235-residue polypeptide: Ribonuclease PH (235 aa).

Phosphate contacts are provided by residues R86 and 124–126 (GTR).

Belongs to the RNase PH family. As to quaternary structure, homohexameric ring arranged as a trimer of dimers.

It carries out the reaction tRNA(n+1) + phosphate = tRNA(n) + a ribonucleoside 5'-diphosphate. Phosphorolytic 3'-5' exoribonuclease that plays an important role in tRNA 3'-end maturation. Removes nucleotide residues following the 3'-CCA terminus of tRNAs; can also add nucleotides to the ends of RNA molecules by using nucleoside diphosphates as substrates, but this may not be physiologically important. Probably plays a role in initiation of 16S rRNA degradation (leading to ribosome degradation) during starvation. The protein is Ribonuclease PH of Legionella pneumophila (strain Corby).